Here is a 359-residue protein sequence, read N- to C-terminus: NF-kappa-B inhibitor beta (359 aa).

Phosphoserine; by RPS6KA1 is present on residues Ser-19 and Ser-23. ANK repeat units follow at residues 57–86, 93–122, 126–155, 206–235, 240–269, and 273–302; these read DGDT…GTEY, LGQT…GVLV, GGHT…SHPR, DGHT…DLNK, CGRT…DPTA, and GGRT…PEPE. Residues 153–192 are disordered; sequence HPRDASDTYLTQSQDHTPDTSHAPVATDPQPNPGNEEELR. Residues 298-308 show a composition bias toward basic and acidic residues; the sequence is APEPEDKDDKL. The segment at 298–359 is disordered; that stretch reads APEPEDKDDK…KPLPDDPNPA (62 aa). Ser-318 carries the post-translational modification Phosphoserine. The segment covering 318-331 has biased composition (acidic residues); that stretch reads SDSDNRDEGDEYDD. The segment covering 342-359 has biased composition (pro residues); sequence QPPPSPAAKPLPDDPNPA.

The protein belongs to the NF-kappa-B inhibitor family. In terms of assembly, interacts with THRB (via ligand-binding domain). Interacts with RELA and REL. Interacts with COMMD1. Interacts with inhibitor kappa B-interacting Ras-like NKIRAS1 and NKIRAS2. In terms of processing, phosphorylated by RPS6KA1; followed by degradation. Interaction with NKIRAS1 and NKIRAS2 probably prevents phosphorylation.

The protein localises to the cytoplasm. It is found in the nucleus. In terms of biological role, inhibits NF-kappa-B by complexing with and trapping it in the cytoplasm. However, the unphosphorylated form resynthesized after cell stimulation is able to bind NF-kappa-B allowing its transport to the nucleus and protecting it to further NFKBIA-dependent inactivation. Association with inhibitor kappa B-interacting NKIRAS1 and NKIRAS2 prevent its phosphorylation rendering it more resistant to degradation, explaining its slower degradation. The chain is NF-kappa-B inhibitor beta (Nfkbib) from Rattus norvegicus (Rat).